The sequence spans 318 residues: Ankyrin repeat and SOCS box protein 7 (318 aa).

7 ANK repeats span residues 13–42, 46–75, 80–109, 116–145, 149–178, 180–208, and 213–242; these read QEELQIQAAVAAGDVHTVRKMLEQGYSPNG, NGWTLLHFSAARGKERCVRVFLEHGADPTV, GGFTALHYAAMHGRARIARLMLESEYRSDI, DGWTPLHVAAHYGRDSFVRLLLEFKAEVDP, KGTTPLQLAIIRERSSCVKILLDHNANIDI, NGFLLRYAVIKSNHSYCRMFLQRGADTNL, and DGQTPLHLSALRDDVLCARMLYNYGADTNT. In terms of domain architecture, SOCS box spans 265-318; sequence LDFLQDVTRQPRTLQDLCRIKIRQCIGLQNLKLLDELPIAKVMKDYLKHKFDDI.

This sequence belongs to the ankyrin SOCS box (ASB) family. In terms of assembly, interacts with CUL5. Interacts with RNF7. Interacts with PSRC1.

It localises to the nucleus. Its subcellular location is the cytoplasm. Its pathway is protein modification; protein ubiquitination. Its function is as follows. Probable substrate-recognition component of a SCF-like ECS (Elongin-Cullin-SOCS-box protein) E3 ubiquitin-protein ligase complex which mediates the ubiquitination and subsequent proteasomal degradation of target proteins. Plays a role in spindle dynamics and genome integrity by targeting the mitotic progression protein PSRC1 for proteasomal degradation in a cell cycle-dependent manner. Also participates in meiosis by mediating the proper attachment between kinetochores and microtubules. The chain is Ankyrin repeat and SOCS box protein 7 (Asb7) from Mus musculus (Mouse).